Consider the following 1073-residue polypeptide: Envelopment polyprotein (1073 aa).

A signal peptide spans 1–19 (MMKVIWFSSLICFVIQCSG). Residues 20-453 (DSGPIICAGP…NPQCYPAKKW (434 aa)) are Lumenal-facing. The cysteines at positions 26 and 49 are disulfide-linked. Asparagine 33 and asparagine 63 each carry an N-linked (GlcNAc...) asparagine; by host glycan. Intrachain disulfides connect cysteine 143/cysteine 156, cysteine 180/cysteine 327, cysteine 206/cysteine 216, cysteine 258/cysteine 305, cysteine 266/cysteine 303, cysteine 274/cysteine 280, cysteine 287/cysteine 292, cysteine 349/cysteine 352, cysteine 356/cysteine 424, and cysteine 376/cysteine 381. A helical transmembrane segment spans residues 454-474 (LFIIIVILLGYAGLMLLTNVL). Positions 475–521 (KAIGIWGSWVIAPVKLMFAIIKKLMRTVSCLMRKLMDRGRQVIHEEI) are golgi retention signal. Over 475 to 535 (KAIGIWGSWV…EGNQDDVRIE (61 aa)) the chain is Cytoplasmic. The segment at 536–562 (MARPRRVRHWMYSPVILTILAIGLAES) is internal signal sequence for glycoprotein C. Cystine bridges form between cysteine 563–cysteine 604, cysteine 576–cysteine 586, cysteine 629–cysteine 725, cysteine 644–cysteine 841, cysteine 650–cysteine 698, cysteine 656–cysteine 705, cysteine 660–cysteine 687, cysteine 691–cysteine 696, cysteine 778–cysteine 793, and cysteine 809–cysteine 823. Topologically, residues 563-1036 (CDEMVHADSK…ALFGNGLSRW (474 aa)) are lumenal. The interval 650 to 656 (CRWAGDC) is fusion loop. The interval 691 to 705 (CGGAACGCFNAAPSC) is fusion loop. N-linked (GlcNAc...) asparagine; by host glycosylation is found at asparagine 853 and asparagine 914. 3 disulfides stabilise this stretch: cysteine 908-cysteine 978, cysteine 918-cysteine 921, and cysteine 943-cysteine 974. Asparagine 936 is a glycosylation site (N-linked (GlcNAc...) asparagine; by host). The helical transmembrane segment at 1037-1057 (ILGVIGVLLGGLALFFMIMSL) threads the bilayer. Residues 1058–1073 (FKLGTKQVFRSRTKLA) are Cytoplasmic-facing.

It belongs to the phlebovirus envelope glycoprotein family. In terms of assembly, homodimer. Heterodimer with glycoprotein C. Homotrimer (postfusion). Heterodimer with glycoprotein N. In terms of processing, specific enzymatic cleavages in vivo yield mature proteins including glycoprotein C and glycoprotein N. Post-translationally, the cytoplasmic tail is Palmitoylated. Glycosylated. In terms of processing, palmitoylated.

It is found in the virion membrane. The protein localises to the host Golgi apparatus membrane. The protein resides in the host endoplasmic reticulum membrane. In terms of biological role, structural component of the virion that interacts with glycoprotein C. It shields the hydrophobic fusion loops of the glycoprotein C, preventing premature fusion. The glycoprotein protrusions are arranged on an icosahedral lattice, with T=12 triangulation. They are able to attach the virion to the host cell receptor CD209/DC-SIGN and to promote fusion of membranes with the late endosome after clathrin-mediated endocytosis of the virion. Plays a role in the packaging of ribonucleoproteins during virus assembly. Its function is as follows. Structural component of the virion that interacts with glycoprotein N. Acts as a class II fusion protein that is activated upon acidification and subsequent repositioning of the glycoprotein N. The glycoprotein protrusions are arranged on an icosahedral lattice, with T=12 triangulation. They are able to attach the virion to the host cell receptor CD209/DC-SIGN and to promote fusion of membranes with the late endosome after clathrin-mediated endocytosis of the virion. The protein is Envelopment polyprotein of Dabie bandavirus (Severe fever with thrombocytopenia virus).